Here is a 464-residue protein sequence, read N- to C-terminus: Cysteine--tRNA ligase (464 aa).

Cys-32 provides a ligand contact to Zn(2+). Positions 34 to 44 (VTVYDDCHIGH) match the 'HIGH' region motif. Zn(2+) is bound by residues Cys-213, His-238, and Glu-242. The 'KMSKS' region signature appears at 270–274 (KMSKS). Lys-273 contributes to the ATP binding site.

Belongs to the class-I aminoacyl-tRNA synthetase family. As to quaternary structure, monomer. The cofactor is Zn(2+).

It localises to the cytoplasm. It catalyses the reaction tRNA(Cys) + L-cysteine + ATP = L-cysteinyl-tRNA(Cys) + AMP + diphosphate. This Francisella tularensis subsp. holarctica (strain LVS) protein is Cysteine--tRNA ligase.